Consider the following 91-residue polypeptide: Small ribosomal subunit protein uS17 (91 aa).

It belongs to the universal ribosomal protein uS17 family. Part of the 30S ribosomal subunit.

Its function is as follows. One of the primary rRNA binding proteins, it binds specifically to the 5'-end of 16S ribosomal RNA. The sequence is that of Small ribosomal subunit protein uS17 from Malacoplasma penetrans (strain HF-2) (Mycoplasma penetrans).